A 388-amino-acid polypeptide reads, in one-letter code: Probable peptidoglycan glycosyltransferase FtsW (388 aa).

Residues M1–T19 lie on the Cytoplasmic side of the membrane. A helical membrane pass occupies residues L20–M40. Residues H41–Q57 lie on the Periplasmic side of the membrane. A helical transmembrane segment spans residues L58 to Y78. Over W79–P85 the chain is Cytoplasmic. A helical transmembrane segment spans residues L86–V106. Over N107–G117 the chain is Periplasmic. Residues L118 to Y137 traverse the membrane as a helical segment. The Cytoplasmic portion of the chain corresponds to I138–H147. The chain crosses the membrane as a helical span at residues S148–L168. Residues E169–P170 lie on the Periplasmic side of the membrane. The helical transmembrane segment at D171 to A191 threads the bilayer. Position 192 (R192) is a topological domain, cytoplasmic. The helical transmembrane segment at L193–S213 threads the bilayer. The Periplasmic portion of the chain corresponds to A214 to D271. Residues F272 to L292 traverse the membrane as a helical segment. Residues F293 to S315 lie on the Cytoplasmic side of the membrane. A helical transmembrane segment spans residues A316 to V336. The Periplasmic segment spans residues N337–L348. Residues P349–F369 form a helical membrane-spanning segment. The Cytoplasmic portion of the chain corresponds to R370–R388.

Belongs to the SEDS family. FtsW subfamily.

The protein resides in the cell inner membrane. The enzyme catalyses [GlcNAc-(1-&gt;4)-Mur2Ac(oyl-L-Ala-gamma-D-Glu-L-Lys-D-Ala-D-Ala)](n)-di-trans,octa-cis-undecaprenyl diphosphate + beta-D-GlcNAc-(1-&gt;4)-Mur2Ac(oyl-L-Ala-gamma-D-Glu-L-Lys-D-Ala-D-Ala)-di-trans,octa-cis-undecaprenyl diphosphate = [GlcNAc-(1-&gt;4)-Mur2Ac(oyl-L-Ala-gamma-D-Glu-L-Lys-D-Ala-D-Ala)](n+1)-di-trans,octa-cis-undecaprenyl diphosphate + di-trans,octa-cis-undecaprenyl diphosphate + H(+). It functions in the pathway cell wall biogenesis; peptidoglycan biosynthesis. Peptidoglycan polymerase that is essential for cell division. The chain is Probable peptidoglycan glycosyltransferase FtsW from Methylomonas methanica (strain DSM 25384 / MC09).